The following is a 631-amino-acid chain: 1-deoxy-D-xylulose-5-phosphate synthase (631 aa).

Residues histidine 73 and 114 to 116 each bind thiamine diphosphate; that span reads GHS. Aspartate 145 is a Mg(2+) binding site. Residues 146-147, asparagine 174, tyrosine 285, and glutamate 366 each bind thiamine diphosphate; that span reads GA. Asparagine 174 contributes to the Mg(2+) binding site.

The protein belongs to the transketolase family. DXPS subfamily. As to quaternary structure, homodimer. Mg(2+) serves as cofactor. Requires thiamine diphosphate as cofactor.

The catalysed reaction is D-glyceraldehyde 3-phosphate + pyruvate + H(+) = 1-deoxy-D-xylulose 5-phosphate + CO2. The protein operates within metabolic intermediate biosynthesis; 1-deoxy-D-xylulose 5-phosphate biosynthesis; 1-deoxy-D-xylulose 5-phosphate from D-glyceraldehyde 3-phosphate and pyruvate: step 1/1. Catalyzes the acyloin condensation reaction between C atoms 2 and 3 of pyruvate and glyceraldehyde 3-phosphate to yield 1-deoxy-D-xylulose-5-phosphate (DXP). This chain is 1-deoxy-D-xylulose-5-phosphate synthase, found in Desulfitobacterium hafniense (strain Y51).